Here is a 951-residue protein sequence, read N- to C-terminus: Sodium/potassium exporting P-type ATPase 1 (951 aa).

Residues 1–57 lie on the Cytoplasmic side of the membrane; that stretch reads MMGANSTEWHGQSVEQVTELLGTDVERGLKESVVGQLQKQFGPNELKGQRGVNPWKV. The chain crosses the membrane as a helical span at residues 58–78; that stretch reads LLAQFTNGLTVILLIATVVSF. Topologically, residues 79–82 are extracellular; the sequence is AVQD. Residues 83 to 103 form a helical membrane-spanning segment; sequence HAEGGVLAFVIIFNASVGFVQ. Residues 104–247 lie on the Cytoplasmic side of the membrane; sequence EYRAEKTMDA…TPMQKRLNRM (144 aa). The chain crosses the membrane as a helical span at residues 248–268; sequence AYILFGISLVLAVIVFAVNKF. The Extracellular portion of the chain corresponds to 269 to 273; sequence EFNTD. The helical transmembrane segment at 274-294 threads the bilayer; the sequence is IIIYAVSLGIAVIPEGLIAVI. Topologically, residues 295–717 are cytoplasmic; that stretch reads TIVMALGVRR…GRRIFSNIRK (423 aa). D330 serves as the catalytic 4-aspartylphosphate intermediate. Mg(2+) is bound by residues D330 and T332. ATP contacts are provided by T332, E414, K467, R511, T575, G576, D577, R636, and K642. Residue D661 coordinates Mg(2+). An ATP-binding site is contributed by N664. A helical transmembrane segment spans residues 718–738; the sequence is FILHLVSTNVGEVIVLIIGLA. The Extracellular segment spans residues 739 to 743; sequence FKDRN. The chain crosses the membrane as a helical span at residues 744-764; it reads GVSVFPLAPVQILFMNMVTST. At 765 to 799 the chain is on the cytoplasmic side; the sequence is PPAMALGVEAASKDTMKVPPHTKGLFGKEVLADMM. Residues 800–820 form a helical membrane-spanning segment; sequence VYGIIMGSLILVDWVLVIYAF. Residues 821-840 lie on the Extracellular side of the membrane; that stretch reads GDSQLGLECNSDRMLNECNT. A helical membrane pass occupies residues 841 to 861; sequence VFRARSTIMVALIWMLLLHAY. Over 862–885 the chain is Cytoplasmic; the sequence is NCRHPRASLFTAEGGGASKLFSNR. A helical membrane pass occupies residues 886–906; it reads LLVWSVLLGSLMPIPTVYIPT. The Extracellular portion of the chain corresponds to 907-916; the sequence is LNTKIFKQET. Residues 917–937 traverse the membrane as a helical segment; it reads ISWEWSIVVVSVVAFFFLSEL. The Cytoplasmic segment spans residues 938-951; it reads YKLIKRNVMTSRVI.

Belongs to the cation transport ATPase (P-type) (TC 3.A.3) family. Type IID subfamily. Requires Mg(2+) as cofactor. In terms of processing, the active site is phosphorylated in presence of sodium or potassium and in conditions of higher pH. Not phosphorylated in presence of calcium ions.

It is found in the cell membrane. The catalysed reaction is Na(+)(in) + ATP + H2O = Na(+)(out) + ADP + phosphate + H(+). It catalyses the reaction K(+)(in) + ATP + H2O = K(+)(out) + ADP + phosphate + H(+). In terms of biological role, catalyzes the hydrolysis of ATP coupled with the export of sodium and potassium from the cell. Appears to export potassium more efficiently than sodium. May transport other cations such as lithium. Sodium/potassium efflux ATPases are involved in salt tolerance and maintaining the membrane potential across the plasma membrane in high salinity (Na+) or alkaline (K+) environments. This chain is Sodium/potassium exporting P-type ATPase 1, found in Marchantia polymorpha (Common liverwort).